An 87-amino-acid polypeptide reads, in one-letter code: MANIKSAKKRAIQAEKARKHNASRRSMTRTFIKKVVAAIASGDKAVAQAAFAAAQPILDRMATKGLIHKNKAARHKSRLSAQIVAMQ.

A disordered region spans residues 1-26 (MANIKSAKKRAIQAEKARKHNASRRS).

The protein belongs to the bacterial ribosomal protein bS20 family.

Functionally, binds directly to 16S ribosomal RNA. In Tolumonas auensis (strain DSM 9187 / NBRC 110442 / TA 4), this protein is Small ribosomal subunit protein bS20.